A 363-amino-acid polypeptide reads, in one-letter code: NADH-quinone oxidoreductase subunit H (363 aa).

A run of 10 helical transmembrane segments spans residues 29 to 49, 62 to 82, 96 to 116, 127 to 147, 163 to 183, 202 to 222, 239 to 257, 264 to 286, 299 to 319, and 339 to 359; these read VLKI…YVVW, GPMY…KLLF, FIIA…VVPF, VGLL…ILAG, AAQV…VMIA, FFDW…VSGV, IVAG…LFFL, ILVS…QGWV, TGGW…YIWF, and FIPL…YGVI.

It belongs to the complex I subunit 1 family. In terms of assembly, NDH-1 is composed of 14 different subunits. Subunits NuoA, H, J, K, L, M, N constitute the membrane sector of the complex.

Its subcellular location is the cell inner membrane. It carries out the reaction a quinone + NADH + 5 H(+)(in) = a quinol + NAD(+) + 4 H(+)(out). Its function is as follows. NDH-1 shuttles electrons from NADH, via FMN and iron-sulfur (Fe-S) centers, to quinones in the respiratory chain. The immediate electron acceptor for the enzyme in this species is believed to be ubiquinone. Couples the redox reaction to proton translocation (for every two electrons transferred, four hydrogen ions are translocated across the cytoplasmic membrane), and thus conserves the redox energy in a proton gradient. This subunit may bind ubiquinone. The polypeptide is NADH-quinone oxidoreductase subunit H (Xanthomonas campestris pv. campestris (strain 8004)).